The following is a 347-amino-acid chain: NHL repeat-containing protein 3 (347 aa).

The first 25 residues, 1-25, serve as a signal peptide directing secretion; sequence MARFWVCVAGAGFFLAFLVLHSRFC. Asn-32 carries N-linked (GlcNAc...) asparagine glycosylation. The stretch at 47-93 is one NHL 1 repeat; it reads RLDVGWPKHPEYFTGTTFCVAVDSLNGLVYIGQRGDNIPKILVFTED. A glycan (N-linked (GlcNAc...) asparagine) is linked at Asn-101. NHL repeat units follow at residues 150–196 and 200–243; these read TPGK…LSQD and LWLH…FDKD. Asn-206 and Asn-278 each carry an N-linked (GlcNAc...) asparagine glycan. The stretch at 294 to 338 is one NHL 4 repeat; it reads GECSVISTIQLADQVLPHLLEVDRKTGAVYVAEIGAKQVQKYVPL.

The protein localises to the secreted. In Homo sapiens (Human), this protein is NHL repeat-containing protein 3 (NHLRC3).